Consider the following 775-residue polypeptide: Venom dipeptidyl peptidase 4 (775 aa).

Residues 1 to 23 (MEVLVQLALLLVVHGSLVVLVAG) form the signal peptide. Asparagine 68 and asparagine 239 each carry an N-linked (GlcNAc...) asparagine glycan. Cystine bridges form between cysteine 450–cysteine 453 and cysteine 463–cysteine 481. Residues asparagine 473, asparagine 505, asparagine 578, and asparagine 631 are each glycosylated (N-linked (GlcNAc...) asparagine). Serine 639 acts as the Charge relay system in catalysis. A disulfide bridge connects residues cysteine 659 and cysteine 770. Residues asparagine 689 and asparagine 694 are each glycosylated (N-linked (GlcNAc...) asparagine). Active-site charge relay system residues include aspartate 718 and histidine 750.

The protein belongs to the peptidase S9B family. DPPIV subfamily. In terms of tissue distribution, expressed by the venom duct.

Its subcellular location is the secreted. The enzyme catalyses Release of an N-terminal dipeptide, Xaa-Yaa-|-Zaa-, from a polypeptide, preferentially when Yaa is Pro, provided Zaa is neither Pro nor hydroxyproline.. With respect to regulation, inhibited by diprotin A. Its function is as follows. Venom dipeptidyl-peptidase which removes N-terminal dipeptides sequentially from polypeptides having unsubstituted N-termini provided that the penultimate residue is proline. May process promelittin into its active form and/or modulate the chemotactic activity of immune cells after the insect sting. The chain is Venom dipeptidyl peptidase 4 from Apis mellifera (Honeybee).